The following is a 448-amino-acid chain: Phosphoglucosamine mutase (448 aa).

The Phosphoserine intermediate role is filled by serine 101. Serine 101, aspartate 242, aspartate 244, and aspartate 246 together coordinate Mg(2+). Serine 101 carries the post-translational modification Phosphoserine.

Belongs to the phosphohexose mutase family. It depends on Mg(2+) as a cofactor. In terms of processing, activated by phosphorylation.

The enzyme catalyses alpha-D-glucosamine 1-phosphate = D-glucosamine 6-phosphate. Catalyzes the conversion of glucosamine-6-phosphate to glucosamine-1-phosphate. The chain is Phosphoglucosamine mutase from Nitrobacter winogradskyi (strain ATCC 25391 / DSM 10237 / CIP 104748 / NCIMB 11846 / Nb-255).